We begin with the raw amino-acid sequence, 1447 residues long: Bud site selection protein 4 (1447 aa).

Positions 1–16 are enriched in basic and acidic residues; the sequence is MHDAESTVDSLLKEID. Disordered stretches follow at residues 1 to 37 and 57 to 76; these read MHDA…TPHN and NTRS…KMST. Residue serine 10 is modified to Phosphoserine. 2 stretches are compositionally biased toward polar residues: residues 22 to 32 and 59 to 76; these read TKSNITQNGSE and RSNA…KMST. Phosphoserine is present on residues serine 78, serine 81, serine 91, serine 96, and serine 167. The interval 272–316 is disordered; the sequence is NLPSKLLNTSNNSHSDSRSPTASVEDLNISTNLPGADSSQNNPVT. Residues 277–316 show a composition bias toward polar residues; that stretch reads LLNTSNNSHSDSRSPTASVEDLNISTNLPGADSSQNNPVT. A Phosphothreonine modification is found at threonine 365. Serine 367 bears the Phosphoserine mark. Residues 444–588 are disordered; it reads HQESEHANEQ…VEENEESEHV (145 aa). Positions 475-494 are enriched in basic and acidic residues; that stretch reads EFQRNSKDGEEYRIVQHEES. Residues 497 to 509 show a composition bias toward polar residues; it reads GQRTKSSEENIIN. Serine 511 carries the post-translational modification Phosphoserine. The span at 538 to 548 shows a compositional bias: polar residues; that stretch reads SSSCEDQSVSE. Residues 549-580 show a composition bias toward basic and acidic residues; sequence ARNKDSIEEKEVETKDENIETEKDESEYHKVE. Serine 616 bears the Phosphoserine mark. Residues 649–664 show a composition bias toward polar residues; that stretch reads NSQFSQQSSITTASTV. Residues 649 to 672 are disordered; that stretch reads NSQFSQQSSITTASTVDSKKDNGS. Positions 768–879 are interaction with IQG1; sequence EHENIPLSTH…SLWESSYELK (112 aa). Serine 805 and serine 811 each carry phosphoserine. The region spanning 1302–1413 is the PH domain; that stretch reads NIYKEGYLLQ…WYNKLQEVVE (112 aa).

It belongs to the BUD4 family. As to quaternary structure, interacts with AXL1, IQG1 and SEC3. In terms of processing, phosphorylated by CDC28.

The protein localises to the bud neck. In terms of biological role, required for establishment of the axial budding pattern in haploid cells. Cooperates with other bud site selection proteins to recognize a spatial landmark during mitosis and they subsequently become a landmark for downstream polarity establishment factors that coordinate axial budding and cytokinesis. Involved in the septin organization at the bud neck. This is Bud site selection protein 4 (BUD4) from Saccharomyces cerevisiae (strain YJM789) (Baker's yeast).